Here is a 1582-residue protein sequence, read N- to C-terminus: MICLAALAVAVPARADEAAAVRDKPNPTLAEVPASGYVPFTGQPFFLLSDASYGTDQEAMVRLEAPGREYKDELARYGGADILVYRVPQPLDFLKAQKNLHRIDVKANYTGEGLANTLAYLWDNWTRQARRAWQRVLSFATRSKAVEAAPQFSMGDQMAAPTRFSNPPQYAPLKGYELLGRFRYPIWEAKPIAPPKDVKLEGSSSEWMPQNVGNVMIPVGKLPAGLYIVEAVIGAYRAHTLLFVSDTVAVTKGTSQGMMVWTAERKSGKPVAGSAVSWTDGVGVLASGTTQADGTAELRHVAPERSYVLGVDRAGGVFISENFYYDSEIYNTKLYAFTDRPLYRPGDDVRVKFIGRNFRSATESTAPAAGDIKLDVIDPTGAPVATTTTRLSGETGADARFTLPSNAQAGGYTLRFDYGGSTYGGAFRVAEYIKPHFDVNLSLDKAGYGTGEAIKGKISLRYPDGKPVKDGKVSVSLRAQQVTMVEGELQYAGLFPVKLEQQELTTDGDGNAALTLPAAKEPSRYVVTVFANDGAAYRVKVTRELLVARGAAPYRLSTAANFTTPGQSVSFNLQPLPAVDGVRGASAPPAKWELVRLESRTRTEGALQPDAKGSATFPVKFEQPGSYTLSVRDAAGNLLAASSHWVAGDGVQTVPGNIEIVFDRDRYQIGDTAEALITFPQPVDDALLTLERDKVERHALLSGGGDWLALQRVTPSQYRARIKIGAEFSPNMTFSALTVRDGDMVFQNAGIVVTQPALDLTVRADKAVYAPGETVTLDLSSALAGKPVPANLTVSVVDEMVYVLQPEVAPSIVDFFYHPRRNSVRTTSSQSFISYDLALSSLPGKPGGTYGRHNERGVKVLERPRRDEQDTAAWVANLQTGADGRARMTFTMPDSLARWRVTVRAVSTTGAADGIVGQRTASIRSDKALYLKWTGPSRFRESDQPRLDMVAFNQTDKDITADWIVSGAGLNINQRVTLKRGANYLHAPLSGTPALQAGIVNAELKQDDRVSDRLQTTVKLDATGWLADRESIVPLTQLQGTRLPLGLPADARDVRLRVVGNTASQFARVADDLIEYPYGCAEQTASRLIPLALAQQSLAATGARLPDGNPAGTQGVDALLRTQRQRLALLAGTNGTFGWWGELTSSSALITSYAYYADWLASRAVGISLPADNWKQVLEAYKRTSQNEPLLHRALALWFANEMGLPVATPLSGVAAELARNAKAPADAEPAPGDSLIFVAPDSPRGRQVAAILTAQLMRQVGQPVPEALVSADIAARTALANDTSPLVQSLLLMGGGRSAADPAPLLARASAAMPTMDRAVALVWLQKGLGGLQGANVAAIQPVLSAGGWQAARSTVGVPTWRWAGAQPPAALDLASTPSDVTTQSAIVSYRSRAPEASRLPITVERKLYRLEPVDAAAPKDDAKAPKRAAADVTANAGITFKAKPVKPGDTLDSNALYVDEVVLTPRQGTYRYGLVEVPLPPGAEVEATTWGIQIDGLKGEPNEGNGPQPFERRAAYEMGQLSYNQPVPTLERPTALRQLVRFSLPGRFALPPARYFRMYQPEAKALQGDGKAASYPFKVE.

A signal peptide spans 1–15 (MICLAALAVAVPARA). The segment at residues 1080–1083 (CAEQ) is a cross-link (isoglutamyl cysteine thioester (Cys-Gln)).

This sequence belongs to the protease inhibitor I39 (alpha-2-macroglobulin) family. Bacterial alpha-2-macroglobulin subfamily.

Protects the bacterial cell from host peptidases. This is Alpha-2-macroglobulin from Ralstonia nicotianae (strain ATCC BAA-1114 / GMI1000) (Ralstonia solanacearum).